A 788-amino-acid chain; its full sequence is Protein FAR1-RELATED SEQUENCE 12 (788 aa).

The FAR1 1 domain maps to 57–133 (EFYNAYAART…QKEHNHELGG (77 aa)). The tract at residues 127–200 (HNHELGGEGS…GEVSDDHHQT (74 aa)) is disordered. Residues 142–151 (PRPSRAPAPT) are compositionally biased toward low complexity. The segment covering 165 to 175 (KVVDESDRETR) has biased composition (basic and acidic residues). An FAR1 2 domain is found at 225-301 (QFYQAYAEVV…NKDHNHDLEP (77 aa)). In terms of domain architecture, MULE spans 399 to 495 (SVVFDTSYRK…SAWQIREKER (97 aa)). The SWIM-type zinc-finger motif lies at 674-710 (HAVTFSASNLNSSCSCQMFEHEGLLCRHILKVFNLLD).

The protein belongs to the FHY3/FAR1 family. Expressed in hypocotyls, rosette and cauline leaves, inflorescences stems, flowers and siliques.

The protein resides in the nucleus. In terms of biological role, putative transcription activator involved in regulating light control of development. In Arabidopsis thaliana (Mouse-ear cress), this protein is Protein FAR1-RELATED SEQUENCE 12 (FRS12).